The primary structure comprises 60 residues: Cecropin-B type 2 (60 aa).

The signal sequence occupies residues 1–24; it reads MNFSKLFALVLLIGLVLLTGQTEA. Ile-58 bears the Isoleucine amide mark.

This sequence belongs to the cecropin family.

It localises to the secreted. Cecropins have lytic and antibacterial activity against several Gram-positive and Gram-negative bacteria. This chain is Cecropin-B type 2 (CECB2), found in Aedes albopictus (Asian tiger mosquito).